Reading from the N-terminus, the 359-residue chain is S-adenosylmethionine-dependent nucleotide dehydratase RSAD2 (359 aa).

The segment at 43-67 is disordered; it reads QTPARKISRPESRTSKQKEGSRAPF. The segment covering 50–63 has biased composition (basic and acidic residues); it reads SRPESRTSKQKEGS. The Radical SAM core domain occupies 67–287; the sequence is FTTPSSVNYH…LERHQSIQCL (221 aa). The [4Fe-4S] cluster site is built by Cys81, Cys85, and Cys88.

It belongs to the radical SAM superfamily. RSAD2 family. [4Fe-4S] cluster serves as cofactor.

The protein resides in the endoplasmic reticulum membrane. Interferon-inducible iron-sulfur (4FE-4S) cluster-binding antiviral protein which plays a major role in the cell antiviral state induced by type I and type II interferon. The protein is S-adenosylmethionine-dependent nucleotide dehydratase RSAD2 of Danio rerio (Zebrafish).